A 98-amino-acid chain; its full sequence is NADH-ubiquinone oxidoreductase chain 4L (98 aa).

3 consecutive transmembrane segments (helical) span residues 1 to 21, 29 to 49, and 59 to 79; these read MTTM…GVFI, TLLC…LILL, and LPLI…ALLV.

The protein belongs to the complex I subunit 4L family. Core subunit of respiratory chain NADH dehydrogenase (Complex I) which is composed of 45 different subunits.

It localises to the mitochondrion inner membrane. The catalysed reaction is a ubiquinone + NADH + 5 H(+)(in) = a ubiquinol + NAD(+) + 4 H(+)(out). In terms of biological role, core subunit of the mitochondrial membrane respiratory chain NADH dehydrogenase (Complex I) which catalyzes electron transfer from NADH through the respiratory chain, using ubiquinone as an electron acceptor. Part of the enzyme membrane arm which is embedded in the lipid bilayer and involved in proton translocation. This Ornithorhynchus anatinus (Duckbill platypus) protein is NADH-ubiquinone oxidoreductase chain 4L (MT-ND4L).